Consider the following 156-residue polypeptide: Transcription antitermination protein NusB (156 aa).

This sequence belongs to the NusB family.

Functionally, involved in transcription antitermination. Required for transcription of ribosomal RNA (rRNA) genes. Binds specifically to the boxA antiterminator sequence of the ribosomal RNA (rrn) operons. This Mycobacterium bovis (strain ATCC BAA-935 / AF2122/97) protein is Transcription antitermination protein NusB.